The sequence spans 460 residues: tRNA hydroxylation protein P (460 aa).

This sequence belongs to the peptidase U32 family.

Functionally, involved in prephenate-dependent formation of 5-hydroxyuridine (ho5U) modification at position 34 in tRNAs, the first step in 5-carboxymethoxyuridine (cmo5U) biosynthesis. The polypeptide is tRNA hydroxylation protein P (Haemophilus influenzae (strain ATCC 51907 / DSM 11121 / KW20 / Rd)).